The sequence spans 227 residues: Urease subunit gamma/beta (227 aa).

The tract at residues 1 to 101 (MRLTPTERDR…LAVVTDPIGG (101 aa)) is urease gamma. A urease beta region spans residues 102 to 227 (GLGDQAPGAL…ACGYLGVEQR (126 aa)).

In the N-terminal section; belongs to the urease gamma subunit family. The protein in the C-terminal section; belongs to the urease beta subunit family. Heterohexamer of 3 UreC (alpha) and 3 UreAB (gamma/beta) subunits.

The protein resides in the cytoplasm. The enzyme catalyses urea + 2 H2O + H(+) = hydrogencarbonate + 2 NH4(+). The protein operates within nitrogen metabolism; urea degradation; CO(2) and NH(3) from urea (urease route): step 1/1. The chain is Urease subunit gamma/beta from Streptomyces avermitilis (strain ATCC 31267 / DSM 46492 / JCM 5070 / NBRC 14893 / NCIMB 12804 / NRRL 8165 / MA-4680).